Consider the following 641-residue polypeptide: Ribosomal oxygenase 1 (641 aa).

N-acetylmethionine is present on Met-1. Disordered stretches follow at residues 1–35 (MDGL…LPLR) and 54–80 (RTQT…DALP). Positions 12–23 (RRGRPKRRRKPQ) are enriched in basic residues. Phosphoserine occurs at positions 60, 63, and 109. The region spanning 294-439 (CSLRLLCPQA…DFLEAILPLA (146 aa)) is the JmjC domain. Fe cation contacts are provided by His-340, Asp-342, and His-405.

Belongs to the ROX family. NO66 subfamily. As to quaternary structure, interacts with SP7/OSX; the interaction is direct. Interacts with MYC. Interacts with PHF19; leading to its recruitment to H3K36me3 sites. Requires Fe(2+) as cofactor. Widely expressed. Overexpressed in lung carcinomas.

The protein localises to the nucleus. The protein resides in the nucleolus. It is found in the nucleoplasm. The enzyme catalyses N(6),N(6)-dimethyl-L-lysyl(36)-[histone H3] + 2 2-oxoglutarate + 2 O2 = L-lysyl(36)-[histone H3] + 2 formaldehyde + 2 succinate + 2 CO2. It carries out the reaction N(6)-methyl-L-lysyl-[protein] + 2-oxoglutarate + O2 = L-lysyl-[protein] + formaldehyde + succinate + CO2. The catalysed reaction is L-histidyl-[protein] + 2-oxoglutarate + O2 = (3S)-3-hydroxy-L-histidyl-[protein] + succinate + CO2. Functionally, oxygenase that can act as both a histone lysine demethylase and a ribosomal histidine hydroxylase. Specifically demethylates 'Lys-4' (H3K4me) and 'Lys-36' (H3K36me) of histone H3, thereby playing a central role in histone code. Preferentially demethylates trimethylated H3 'Lys-4' (H3K4me3) and monomethylated H3 'Lys-4' (H3K4me1) residues, while it has weaker activity for dimethylated H3 'Lys-36' (H3K36me2). Acts as a regulator of osteoblast differentiation via its interaction with SP7/OSX by demethylating H3K4me and H3K36me, thereby inhibiting SP7/OSX-mediated promoter activation. Also catalyzes demethylation of non-histone proteins, such as CGAS: demethylation of monomethylated CGAS promotes interaction between CGAS and PARP1, followed by PARP1 inactivation. Also catalyzes the hydroxylation of 60S ribosomal protein L8 on 'His-216', thereby playing a role in ribosome biogenesis. Participates in MYC-induced transcriptional activation. This chain is Ribosomal oxygenase 1, found in Homo sapiens (Human).